The sequence spans 105 residues: Nucleoid-associated protein Lm4b_02677 (105 aa).

Low complexity predominate over residues Met1 to Lys16. The tract at residues Met1–Lys23 is disordered.

Belongs to the YbaB/EbfC family. As to quaternary structure, homodimer.

It is found in the cytoplasm. Its subcellular location is the nucleoid. Binds to DNA and alters its conformation. May be involved in regulation of gene expression, nucleoid organization and DNA protection. The protein is Nucleoid-associated protein Lm4b_02677 of Listeria monocytogenes serotype 4b (strain CLIP80459).